A 257-amino-acid chain; its full sequence is MLSRRIIPCLDVRDGRVVKGVKFRDHVDMGDIVELALRYRDHGADELVFYDIGASPQGRSVDYRWVERVARLIDIPFCVAGGIGEVETARAVLHAGADKISINSPALRQPALISALAEAFGVQCVVVGIDSIREADGQWRVRCNTGDPDKTQALPLRTLDWIVEAQRLGAGEIVLNCMDSDGVRCGYDIAQLSQARALCQVPLVASGGAGDMQHFADVFHKADVDGALAASVFHSGAISIPGLKQFLREQQIEVRDV.

Catalysis depends on residues Asp-11 and Asp-130.

The protein belongs to the HisA/HisF family. As to quaternary structure, heterodimer of HisH and HisF.

The protein localises to the cytoplasm. It catalyses the reaction 5-[(5-phospho-1-deoxy-D-ribulos-1-ylimino)methylamino]-1-(5-phospho-beta-D-ribosyl)imidazole-4-carboxamide + L-glutamine = D-erythro-1-(imidazol-4-yl)glycerol 3-phosphate + 5-amino-1-(5-phospho-beta-D-ribosyl)imidazole-4-carboxamide + L-glutamate + H(+). The protein operates within amino-acid biosynthesis; L-histidine biosynthesis; L-histidine from 5-phospho-alpha-D-ribose 1-diphosphate: step 5/9. Its function is as follows. IGPS catalyzes the conversion of PRFAR and glutamine to IGP, AICAR and glutamate. The HisF subunit catalyzes the cyclization activity that produces IGP and AICAR from PRFAR using the ammonia provided by the HisH subunit. This chain is Imidazole glycerol phosphate synthase subunit HisF, found in Xylella fastidiosa (strain M23).